We begin with the raw amino-acid sequence, 205 residues long: Guanylate kinase (205 aa).

The Guanylate kinase-like domain occupies 6 to 185 (GLLIVLSGPS…ACERIKAIVV (180 aa)). Residue 13–20 (GPSGVGKG) coordinates ATP.

It belongs to the guanylate kinase family.

The protein resides in the cytoplasm. The enzyme catalyses GMP + ATP = GDP + ADP. Its function is as follows. Essential for recycling GMP and indirectly, cGMP. This chain is Guanylate kinase, found in Bacillus anthracis.